The chain runs to 66 residues: uncharacterized protein (66 aa).

The signal sequence occupies residues Met-1–Asn-25. Residues Gln-21–Ala-31 show a composition bias toward polar residues. Residues Gln-21–Asp-66 are disordered.

This is an uncharacterized protein from Bacillus subtilis (strain 168).